The chain runs to 475 residues: Glutamyl-tRNA(Gln) amidotransferase subunit A (475 aa).

Residues Lys-76 and Ser-151 each act as charge relay system in the active site. Ser-175 (acyl-ester intermediate) is an active-site residue.

Belongs to the amidase family. GatA subfamily. As to quaternary structure, heterotrimer of A, B and C subunits.

The enzyme catalyses L-glutamyl-tRNA(Gln) + L-glutamine + ATP + H2O = L-glutaminyl-tRNA(Gln) + L-glutamate + ADP + phosphate + H(+). Functionally, allows the formation of correctly charged Gln-tRNA(Gln) through the transamidation of misacylated Glu-tRNA(Gln) in organisms which lack glutaminyl-tRNA synthetase. The reaction takes place in the presence of glutamine and ATP through an activated gamma-phospho-Glu-tRNA(Gln). The protein is Glutamyl-tRNA(Gln) amidotransferase subunit A of Pelodictyon phaeoclathratiforme (strain DSM 5477 / BU-1).